The primary structure comprises 740 residues: MSQSASTPATPITAKIVAEHGLTEAEYAKVLAIMGREPNLVELGIFSVMWSEHCSYKSSKKWLKTLPTTAPWVIQGPGENAGVIDIGDGLTAIFKMESHNHPSYIEPYQGAATGVGGILRDVFTMGARPVANLNALRFGDPSDPRTRHLISGVVAGIGGYGNCVGVPTVGGEVNFHASFNGNNLVNAMTVGVARADRIFYSAAAGIGNSVVYVGSKTGRDGIHGATMASAEFSEDSEEKRPTVQVGDPFTEKLLIEACLELMNTDAIVAIQDMGAAGLTSSCFEMASKGGMGVDLALDRVPMREEGMTPYELMLSESQERMLMVLKPGKEDMARALFEKWELDFAIIGTLTDSGRMVLTWHGEVVGDLPIDPLAAASPEYDRPWEPTPMAAAADLSGAEDTPWSEALLRLIGCPDVASRRWIWEQYDHLVMGNTLQRPGGDAAVIRLDEAPGKGLAMTTDCTPRYVHADPVEGGKQAVAEAWRNLTAVGARPLAITDNMNFGNPEKPRIMGQFVGACQGISEACLALDFPVVSGNVSLYNETNGQAILPTPTIGGVGVLDNVEASVSIALKAAGEAILVAGGFHGSTGAWLGQSLFLREILGREEGAPPPVDLAAERKVGDFVRGLILGASVTACHDLSDGGLLVALAEMAMAGDLGAELTLEGHPDNGRLFGEDQGRYLLTVAEGDRDAVVAAAEAAGVPLRVVGTTGGDALVVNGFVGPSVAALRKVHEEWLPTYMAG.

Residue H53 is part of the active site. ATP is bound by residues Y56 and K95. A Mg(2+)-binding site is contributed by E97. Residues 98–101 and R120 contribute to the substrate site; that span reads SHNH. Catalysis depends on H99, which acts as the Proton acceptor. D121 provides a ligand contact to Mg(2+). Q244 is a substrate binding site. D272 lines the Mg(2+) pocket. 316–318 is a binding site for substrate; the sequence is ESQ. Positions 497 and 534 each coordinate ATP. Residue N535 participates in Mg(2+) binding. S537 serves as a coordination point for substrate.

It belongs to the FGAMS family. As to quaternary structure, monomer. Part of the FGAM synthase complex composed of 1 PurL, 1 PurQ and 2 PurS subunits.

It is found in the cytoplasm. It carries out the reaction N(2)-formyl-N(1)-(5-phospho-beta-D-ribosyl)glycinamide + L-glutamine + ATP + H2O = 2-formamido-N(1)-(5-O-phospho-beta-D-ribosyl)acetamidine + L-glutamate + ADP + phosphate + H(+). Its pathway is purine metabolism; IMP biosynthesis via de novo pathway; 5-amino-1-(5-phospho-D-ribosyl)imidazole from N(2)-formyl-N(1)-(5-phospho-D-ribosyl)glycinamide: step 1/2. In terms of biological role, part of the phosphoribosylformylglycinamidine synthase complex involved in the purines biosynthetic pathway. Catalyzes the ATP-dependent conversion of formylglycinamide ribonucleotide (FGAR) and glutamine to yield formylglycinamidine ribonucleotide (FGAM) and glutamate. The FGAM synthase complex is composed of three subunits. PurQ produces an ammonia molecule by converting glutamine to glutamate. PurL transfers the ammonia molecule to FGAR to form FGAM in an ATP-dependent manner. PurS interacts with PurQ and PurL and is thought to assist in the transfer of the ammonia molecule from PurQ to PurL. This Rhodospirillum rubrum (strain ATCC 11170 / ATH 1.1.1 / DSM 467 / LMG 4362 / NCIMB 8255 / S1) protein is Phosphoribosylformylglycinamidine synthase subunit PurL.